The following is a 620-amino-acid chain: Chaperone protein DnaK (620 aa).

Residues 579-620 (KAQKEASAGAEASEDASGPSSTGSASDDDVVDADYEVVDEDK) form a disordered region. Residues 583–603 (EASAGAEASEDASGPSSTGSA) show a composition bias toward low complexity. The segment covering 604–620 (SDDDVVDADYEVVDEDK) has biased composition (acidic residues).

It belongs to the heat shock protein 70 family.

Its function is as follows. Acts as a chaperone. In Methanococcoides burtonii (strain DSM 6242 / NBRC 107633 / OCM 468 / ACE-M), this protein is Chaperone protein DnaK.